Consider the following 501-residue polypeptide: L-arabinose isomerase (501 aa).

Residues Glu306, Glu333, His350, and His449 each coordinate Mn(2+).

Belongs to the arabinose isomerase family. Mn(2+) is required as a cofactor.

It catalyses the reaction beta-L-arabinopyranose = L-ribulose. Its pathway is carbohydrate degradation; L-arabinose degradation via L-ribulose; D-xylulose 5-phosphate from L-arabinose (bacterial route): step 1/3. Functionally, catalyzes the conversion of L-arabinose to L-ribulose. In Herpetosiphon aurantiacus (strain ATCC 23779 / DSM 785 / 114-95), this protein is L-arabinose isomerase.